A 230-amino-acid polypeptide reads, in one-letter code: Sugar fermentation stimulation protein homolog (230 aa).

Belongs to the SfsA family.

This Clostridium acetobutylicum (strain ATCC 824 / DSM 792 / JCM 1419 / IAM 19013 / LMG 5710 / NBRC 13948 / NRRL B-527 / VKM B-1787 / 2291 / W) protein is Sugar fermentation stimulation protein homolog.